The chain runs to 64 residues: Putative antitoxin VapB51 (64 aa).

Functionally, possibly the antitoxin component of a type II toxin-antitoxin (TA) system. Its cognate toxin is VapC51. In Mycobacterium tuberculosis (strain ATCC 25618 / H37Rv), this protein is Putative antitoxin VapB51.